Here is a 574-residue protein sequence, read N- to C-terminus: Ribonuclease Y (574 aa).

The helical transmembrane segment at 1-21 threads the bilayer; sequence MSLLDLVLLLLVLGLGGVLLL. Positions 264 to 327 constitute a KH domain; that stretch reads AVTVVPIPSD…EIARMALEEL (64 aa). An HD domain is found at 390–483; sequence VLKHSIQVAH…VAAADALSAA (94 aa).

The protein belongs to the RNase Y family.

It localises to the cell membrane. Its function is as follows. Endoribonuclease that initiates mRNA decay. The sequence is that of Ribonuclease Y from Thermus thermophilus (strain ATCC BAA-163 / DSM 7039 / HB27).